The sequence spans 130 residues: Capsid protein (130 aa).

The tract at residues 32–105 (EWISSNSRSQ…FATNDDCALI (74 aa)) is viral RNA-binding.

This sequence belongs to the Leviviricetes capsid protein family. As to quaternary structure, homodimer. The capsid proteins form dimers that assemble by group of 5. Twelve such pentamers are linked together with free dimers. The homodimers binds to the viral RNA via an operator hairpin, but also to many other RNA sequences in the viral genome; this interaction probably shifts the virus from the replicative to the assembly phase and ensures specific encapsidation of the viral genome.

It is found in the virion. In terms of biological role, capsid protein self-assembles to form an icosahedral capsid with a T=3 symmetry, about 26 nm in diameter, and consisting of 89 capsid proteins dimers (178 capsid proteins). Involved in viral genome encapsidation through the interaction between a capsid protein dimer and the multiple packaging signals present in the RNA genome. The capsid also contains 1 copy of the A2 maturation protein. Functionally, acts as a translational repressor of viral replicase synthesis late in infection. This latter function is the result of capsid protein interaction with an RNA hairpin which contains the replicase ribosome-binding site. The protein is Capsid protein of Enterobacteria phage fr (Bacteriophage fr).